We begin with the raw amino-acid sequence, 87 residues long: Small ribosomal subunit protein uS19m (87 aa).

Belongs to the universal ribosomal protein uS19 family.

The protein localises to the mitochondrion. The polypeptide is Small ribosomal subunit protein uS19m (mrps19) (Dictyostelium citrinum (Slime mold)).